The primary structure comprises 425 residues: Adenylosuccinate synthetase (425 aa).

GTP-binding positions include glycine 12–lysine 18 and glycine 40–threonine 42. Aspartate 13 serves as the catalytic Proton acceptor. Aspartate 13 and glycine 40 together coordinate Mg(2+). IMP-binding positions include aspartate 13–lysine 16, asparagine 38–histidine 41, threonine 130, arginine 144, glutamine 224, threonine 239, and arginine 301. Histidine 41 serves as the catalytic Proton donor. Threonine 297–arginine 303 provides a ligand contact to substrate. Residues arginine 303, lysine 329–aspartate 331, and serine 411–serine 413 each bind GTP.

This sequence belongs to the adenylosuccinate synthetase family. Homodimer. The cofactor is Mg(2+).

The protein localises to the cytoplasm. The enzyme catalyses IMP + L-aspartate + GTP = N(6)-(1,2-dicarboxyethyl)-AMP + GDP + phosphate + 2 H(+). It participates in purine metabolism; AMP biosynthesis via de novo pathway; AMP from IMP: step 1/2. In terms of biological role, plays an important role in the de novo pathway of purine nucleotide biosynthesis. Catalyzes the first committed step in the biosynthesis of AMP from IMP. This Wolbachia sp. subsp. Drosophila simulans (strain wRi) protein is Adenylosuccinate synthetase.